The following is a 70-amino-acid chain: MGSCVSVKSISISMDTVSISSIDDEYYYNIKNKPIYVRRKNSCSSTLESRYSTYSLESRYSTYSIKSVYF.

This is an uncharacterized protein from Swinepox virus (strain Kasza) (SWPV).